The following is a 255-amino-acid chain: ATP synthase subunit a 2 (255 aa).

Transmembrane regions (helical) follow at residues 26–46, 86–106, 131–151, 205–225, and 230–250; these read SINIDSMIMVWMVGLLFIGVF, LIGPLALTIFVWVFLMNSIDL, DVNVPVSMALGVFILIIGYTL, MIFILIALMPWWMQWALSVPW, and ILIVFLQAFIFMVLTIVYLAM.

The protein belongs to the ATPase A chain family. F-type ATPases have 2 components, CF(1) - the catalytic core - and CF(0) - the membrane proton channel. CF(1) has five subunits: alpha(3), beta(3), gamma(1), delta(1), epsilon(1). CF(0) has three main subunits: a(1), b(2) and c(9-12). The alpha and beta chains form an alternating ring which encloses part of the gamma chain. CF(1) is attached to CF(0) by a central stalk formed by the gamma and epsilon chains, while a peripheral stalk is formed by the delta and b chains.

Its subcellular location is the cell inner membrane. Key component of the proton channel; it plays a direct role in the translocation of protons across the membrane. The polypeptide is ATP synthase subunit a 2 (Photobacterium profundum (strain SS9)).